The primary structure comprises 459 residues: tRNA modification GTPase MnmE (459 aa).

Residues R22, E85, and R124 each coordinate (6S)-5-formyl-5,6,7,8-tetrahydrofolate. A TrmE-type G domain is found at G221 to F380. Residue N231 coordinates K(+). Residues N231–S236, T250–T256, and D275–G278 each bind GTP. S235 is a Mg(2+) binding site. K(+)-binding residues include T250, V252, and T255. T256 provides a ligand contact to Mg(2+). Position 459 (K459) interacts with (6S)-5-formyl-5,6,7,8-tetrahydrofolate.

The protein belongs to the TRAFAC class TrmE-Era-EngA-EngB-Septin-like GTPase superfamily. TrmE GTPase family. As to quaternary structure, homodimer. Heterotetramer of two MnmE and two MnmG subunits. It depends on K(+) as a cofactor.

It localises to the cytoplasm. Its function is as follows. Exhibits a very high intrinsic GTPase hydrolysis rate. Involved in the addition of a carboxymethylaminomethyl (cmnm) group at the wobble position (U34) of certain tRNAs, forming tRNA-cmnm(5)s(2)U34. The protein is tRNA modification GTPase MnmE of Staphylococcus aureus (strain Mu3 / ATCC 700698).